Reading from the N-terminus, the 139-residue chain is Non-structural protein 1 (139 aa).

Residues 136–139 (DLNS) carry the DLNP; interaction with MAP1B motif.

This sequence belongs to the pneumovirus non-structural protein 1 family. Monomer. Homomultimer. Heteromultimer with NS2. Interacts with the matrix protein M. Interacts with host ELOC and CUL2; this interaction allows NS1 to form an active E3 ligase with ELOC and CUL2. Interacts with host IRF3; this interaction leads to the disrupted association of IRF3 with CREBBP and thus reduced binding of IRF3 to the IFN-beta promoter. Interacts with host MAVS; this interaction prevents MAVS binding to RIGI and inhibits signaling pathway leading to interferon production. Interacts with host MAP1B/microtubule-associated protein 1B. Interacts with host TRIM25 (via SPRY domain); this interaction suppresses RIGI ubiquitination and results in decreased interaction between RIGI and MAVS.

The protein localises to the host cytoplasm. Its subcellular location is the host mitochondrion. It localises to the host nucleus. In terms of biological role, plays a major role in antagonizing the type I IFN-mediated antiviral response by degrading or inhibiting multiple cellular factors required for either IFN induction or response pathways. Acts cooperatively with NS2 to repress activation and nuclear translocation of host IFN-regulatory factor IRF3. Also disrupts the association of IRF3 with CREBBP. Interacts with host mitochondrial-associated membrane (MAM) MAVS and prevents the interaction with RIGI. Interacts with TRIM25 to suppress TRIM25-mediated RIGI ubiquitination and thereby RIGI-MAVS interaction. Together with NS2, participates in the proteasomal degradation of host STAT2, IRF3, IRF7, TBK1 and RIGI through a NS-degradasome involving CUL2 and Elongin-C. The degradasome requires an intact mitochondrial MAVS. Decreases the levels of host TRAF3 and IKBKE/IKK-epsilon. As functions other than disruptions of the type I IFN-mediated antiviral signaling pathways, induces host SOCS1 and SOCS3 expression. Suppresses premature apoptosis by an NF-kappa-B-dependent, interferon-independent mechanism and thus facilitates virus growth. Additionally, NS1 may serve some inhibitory role in viral transcription and RNA replication. Suppresses proliferation and activation of host CD103+ CD8+ cytotoxic T-lymphocytes and Th17 helper T-lymphocytes. In Human respiratory syncytial virus B (strain 18537), this protein is Non-structural protein 1 (1C).